A 429-amino-acid polypeptide reads, in one-letter code: Phosphoglucosamine mutase (429 aa).

Ser-96 serves as the catalytic Phosphoserine intermediate. Mg(2+) contacts are provided by Ser-96, Asp-230, Asp-232, and Asp-234. Phosphoserine is present on Ser-96.

Belongs to the phosphohexose mutase family. The cofactor is Mg(2+). Post-translationally, activated by phosphorylation.

The catalysed reaction is alpha-D-glucosamine 1-phosphate = D-glucosamine 6-phosphate. Functionally, catalyzes the conversion of glucosamine-6-phosphate to glucosamine-1-phosphate. This Thermotoga petrophila (strain ATCC BAA-488 / DSM 13995 / JCM 10881 / RKU-1) protein is Phosphoglucosamine mutase.